The sequence spans 349 residues: Protein-glutamate methylesterase/protein-glutamine glutaminase 1 (349 aa).

The Response regulatory domain maps to 2–119 (RTLIVDDSAF…DVNKAEKELV (118 aa)). Aspartate 53 is modified (4-aspartylphosphate). A CheB-type methylesterase domain is found at 158-345 (ILIGSSTGGP…EEIVKRLEAK (188 aa)). Residues serine 163, histidine 190, and aspartate 287 contribute to the active site.

Belongs to the CheB family. Phosphorylated by CheA. Phosphorylation of the N-terminal regulatory domain activates the methylesterase activity.

It is found in the cytoplasm. The enzyme catalyses [protein]-L-glutamate 5-O-methyl ester + H2O = L-glutamyl-[protein] + methanol + H(+). It carries out the reaction L-glutaminyl-[protein] + H2O = L-glutamyl-[protein] + NH4(+). Involved in chemotaxis. Part of a chemotaxis signal transduction system that modulates chemotaxis in response to various stimuli. Catalyzes the demethylation of specific methylglutamate residues introduced into the chemoreceptors (methyl-accepting chemotaxis proteins or MCP) by CheR. Also mediates the irreversible deamidation of specific glutamine residues to glutamic acid. The sequence is that of Protein-glutamate methylesterase/protein-glutamine glutaminase 1 from Methanosarcina acetivorans (strain ATCC 35395 / DSM 2834 / JCM 12185 / C2A).